A 402-amino-acid polypeptide reads, in one-letter code: Mannonate dehydratase (402 aa).

This sequence belongs to the mannonate dehydratase family. It depends on Fe(2+) as a cofactor. Mn(2+) is required as a cofactor.

The catalysed reaction is D-mannonate = 2-dehydro-3-deoxy-D-gluconate + H2O. It functions in the pathway carbohydrate metabolism; pentose and glucuronate interconversion. Functionally, catalyzes the dehydration of D-mannonate. This Rhizobium meliloti (strain 1021) (Ensifer meliloti) protein is Mannonate dehydratase.